The sequence spans 65 residues: Large ribosomal subunit protein uL29 (65 aa).

It belongs to the universal ribosomal protein uL29 family.

This chain is Large ribosomal subunit protein uL29, found in Desulforapulum autotrophicum (strain ATCC 43914 / DSM 3382 / VKM B-1955 / HRM2) (Desulfobacterium autotrophicum).